The following is a 333-amino-acid chain: Protein-methionine-sulfoxide reductase catalytic subunit MsrP (333 aa).

Residues 1–43 (MHKHRKPTEADVTPESLFYQRRRILKALGISAAALSLPFSAQA) constitute a signal peptide (tat-type signal). Residues Asn-87, 90–91 (YE), Cys-145, Thr-180, Asn-232, Arg-237, and 248–250 (NIK) each bind Mo-molybdopterin.

This sequence belongs to the MsrP family. In terms of assembly, heterodimer of a catalytic subunit (MsrP) and a heme-binding subunit (MsrQ). Mo-molybdopterin is required as a cofactor. Post-translationally, predicted to be exported by the Tat system. The position of the signal peptide cleavage has not been experimentally proven.

It is found in the periplasm. The catalysed reaction is L-methionyl-[protein] + a quinone + H2O = L-methionyl-(S)-S-oxide-[protein] + a quinol. It carries out the reaction L-methionyl-[protein] + a quinone + H2O = L-methionyl-(R)-S-oxide-[protein] + a quinol. Part of the MsrPQ system that repairs oxidized periplasmic proteins containing methionine sulfoxide residues (Met-O), using respiratory chain electrons. Thus protects these proteins from oxidative-stress damage caused by reactive species of oxygen and chlorine generated by the host defense mechanisms. MsrPQ is essential for the maintenance of envelope integrity under bleach stress, rescuing a wide series of structurally unrelated periplasmic proteins from methionine oxidation. The catalytic subunit MsrP is non-stereospecific, being able to reduce both (R-) and (S-) diastereoisomers of methionine sulfoxide. The sequence is that of Protein-methionine-sulfoxide reductase catalytic subunit MsrP from Pectobacterium carotovorum subsp. carotovorum (strain PC1).